A 27-amino-acid polypeptide reads, in one-letter code: rRNA/tRNA 2'-O-methyltransferase fibrillarin (27 aa).

Over residues 1–12 the composition is skewed to gly residues; that stretch reads XFEGRGGFGGRG. Residues 1–27 form a disordered region; sequence XFEGRGGFGGRGGGDRGGRGXGGFGGG. Asymmetric dimethylarginine occurs at positions 5, 11, 16, and 19.

It belongs to the methyltransferase superfamily. Fibrillarin family. In terms of assembly, component of box C/D small nucleolar ribonucleoprotein (snoRNP) particles. It is associated with the U3, U8 and U13 small nuclear RNAs.

Its subcellular location is the nucleus. It is found in the nucleolus. The catalysed reaction is L-glutaminyl-[histone H2A] + S-adenosyl-L-methionine = N(5)-methyl-L-glutaminyl-[histone H2A] + S-adenosyl-L-homocysteine + H(+). Functionally, S-adenosyl-L-methionine-dependent methyltransferase that has the ability to methylate both RNAs and proteins. Involved in pre-rRNA processing. Utilizes the methyl donor S-adenosyl-L-methionine to catalyze the site-specific 2'-hydroxyl methylation of ribose moieties in pre-ribosomal RNA. Site specificity is provided by a guide RNA that base pairs with the substrate. Methylation occurs at a characteristic distance from the sequence involved in base pairing with the guide RNA. Also acts as a protein methyltransferase by mediating methylation of 'Gln-105' of histone H2A (H2AQ105me), a modification that impairs binding of the FACT complex and is specifically present at 35S ribosomal DNA locus. In Physarum polycephalum (Slime mold), this protein is rRNA/tRNA 2'-O-methyltransferase fibrillarin.